The sequence spans 229 residues: Peptidase E (229 aa).

Active-site charge relay system residues include serine 120, aspartate 135, and histidine 157.

This sequence belongs to the peptidase S51 family.

Its subcellular location is the cytoplasm. The enzyme catalyses Dipeptidase E catalyzes the hydrolysis of dipeptides Asp-|-Xaa. It does not act on peptides with N-terminal Glu, Asn or Gln, nor does it cleave isoaspartyl peptides.. In terms of biological role, hydrolyzes dipeptides containing N-terminal aspartate residues. May play a role in allowing the cell to use peptide aspartate to spare carbon otherwise required for the synthesis of the aspartate family of amino acids. The sequence is that of Peptidase E from Salmonella paratyphi C (strain RKS4594).